Here is an 878-residue protein sequence, read N- to C-terminus: Aconitase htyD (878 aa).

Residues Gln173 and 290-292 each bind substrate; that span reads DSH. The [4Fe-4S] cluster site is built by Cys472, Cys535, and Cys538. Residues Arg558 and Arg563 each contribute to the substrate site. The segment at 626–671 is disordered; that stretch reads IAIANQRTKPAPTMPAYVEPYRSFQPPVPPSSDQPQSMKDHGKTSN. 742–743 serves as a coordination point for substrate; it reads SR.

Belongs to the aconitase/IPM isomerase family.

The protein operates within antifungal biosynthesis. Aconitase; part of the gene cluster that mediates the de novo generation of L-homotyrosine from acetyl-CoA and 4-hydroxyphenyl-pyruvate. L-homotyrosine is a building block of echinocandin B, a fungal lipidated cyclic hexapeptide that acts as an antifungal agent. L-homotyrosine 4-hydroxyphenyl-pyruvate first undergoes an aldol-type condensation by htyA with the C-2 of acetyl-CoA followed by the release of CoA to form 2-(4-hydroxybenzyl)-malate. This is followed by isomerization of 2-(4-hydroxy-benzyl)-malate to 3-(4-hydroxybenzyl)-malate by htyD. Thereafter, 3-(4-hydroxybenzyl)-malate undergoes decarboxylation and oxidation to form 2-oxo-4-(4-hydroxybenzyl)butanoic acid, coupled to reduction of NAD(+) to NADH by htyC. The product then undergoes transamination catalyzed by htyB to form L-homotyrosine. The chain is Aconitase htyD from Aspergillus rugulosus (Emericella rugulosa).